The following is a 229-amino-acid chain: Enolase-phosphatase E1 (229 aa).

It belongs to the HAD-like hydrolase superfamily. MasA/MtnC family. In terms of assembly, monomer. It depends on Mg(2+) as a cofactor.

It catalyses the reaction 5-methylsulfanyl-2,3-dioxopentyl phosphate + H2O = 1,2-dihydroxy-5-(methylsulfanyl)pent-1-en-3-one + phosphate. It functions in the pathway amino-acid biosynthesis; L-methionine biosynthesis via salvage pathway; L-methionine from S-methyl-5-thio-alpha-D-ribose 1-phosphate: step 3/6. The protein operates within amino-acid biosynthesis; L-methionine biosynthesis via salvage pathway; L-methionine from S-methyl-5-thio-alpha-D-ribose 1-phosphate: step 4/6. Bifunctional enzyme that catalyzes the enolization of 2,3-diketo-5-methylthiopentyl-1-phosphate (DK-MTP-1-P) into the intermediate 2-hydroxy-3-keto-5-methylthiopentenyl-1-phosphate (HK-MTPenyl-1-P), which is then dephosphorylated to form the acireductone 1,2-dihydroxy-3-keto-5-methylthiopentene (DHK-MTPene). The chain is Enolase-phosphatase E1 from Serratia proteamaculans (strain 568).